We begin with the raw amino-acid sequence, 552 residues long: Non-structural protein NS1 (552 aa).

It belongs to the orbivirus non-structural protein NS1 family.

This is Non-structural protein NS1 (Segment-5) from Bluetongue virus 10 (isolate USA) (BTV 10).